Consider the following 248-residue polypeptide: Leucyl/phenylalanyl-tRNA--protein transferase (248 aa).

This sequence belongs to the L/F-transferase family.

The protein resides in the cytoplasm. It carries out the reaction N-terminal L-lysyl-[protein] + L-leucyl-tRNA(Leu) = N-terminal L-leucyl-L-lysyl-[protein] + tRNA(Leu) + H(+). It catalyses the reaction N-terminal L-arginyl-[protein] + L-leucyl-tRNA(Leu) = N-terminal L-leucyl-L-arginyl-[protein] + tRNA(Leu) + H(+). The catalysed reaction is L-phenylalanyl-tRNA(Phe) + an N-terminal L-alpha-aminoacyl-[protein] = an N-terminal L-phenylalanyl-L-alpha-aminoacyl-[protein] + tRNA(Phe). Its function is as follows. Functions in the N-end rule pathway of protein degradation where it conjugates Leu, Phe and, less efficiently, Met from aminoacyl-tRNAs to the N-termini of proteins containing an N-terminal arginine or lysine. In Ralstonia pickettii (strain 12J), this protein is Leucyl/phenylalanyl-tRNA--protein transferase.